Consider the following 78-residue polypeptide: Translational regulator CsrA (78 aa).

It belongs to the CsrA/RsmA family. In terms of assembly, homodimer; the beta-strands of each monomer intercalate to form a hydrophobic core, while the alpha-helices form wings that extend away from the core.

Its subcellular location is the cytoplasm. Functionally, a translational regulator that binds mRNA to regulate translation initiation and/or mRNA stability. Usually binds in the 5'-UTR at or near the Shine-Dalgarno sequence preventing ribosome-binding, thus repressing translation. Its main target seems to be the major flagellin gene, while its function is anatagonized by FliW. This chain is Translational regulator CsrA, found in Nitratidesulfovibrio vulgaris (strain ATCC 29579 / DSM 644 / CCUG 34227 / NCIMB 8303 / VKM B-1760 / Hildenborough) (Desulfovibrio vulgaris).